A 332-amino-acid chain; its full sequence is MAAEEGKFDNILLAVAEKHHGGVPEFLGTLASFLRRKTDFFTGAKQTEWEKLLLDVFNKESKLAVTENYEKIKAREASQRLKAEKERAERKARKQEIDDNKICDITDEEAAAIIKEEETKKRQQLLDSAGGEPSASNRDGISKPIEKVDDESDKSELGKLMPNAGNGCTLENYTWTQTLEEVELKIPFNLTFGLRARDLVISIGKKSLKVGIKGQTPIIDGELCGEVKTEESVWVLQDSKTVMITLDKINKMNWWSRLVTTDPEISTRKINPESSKLSDLDGETRSMVEKMMYDQRQKELGLPTSEDRKKQDILEKFKQQHPEMDFSKCKFN.

Positions 122-161 are disordered; it reads RQQLLDSAGGEPSASNRDGISKPIEKVDDESDKSELGKLM. Positions 168 to 259 constitute a CS domain; it reads CTLENYTWTQ…NKMNWWSRLV (92 aa).

It belongs to the nudC family. Interacts with PCID2.

The protein resides in the cytoplasm. Chaperone protein with functions in nuclear localization and cytoplasmic mRNA trafficking. In postmitotic neurons, acts with nudE downstream of dar1 to ensure correct positioning of the nuclei in primary dendrites and as a consequence, is required for determining multipolar neuron morphology. Stabilizes PCID2 in the cytoplasm and thereby is required for promoting cytoplasmic mRNA trafficking. This is Nuclear migration protein nudC from Drosophila melanogaster (Fruit fly).